The sequence spans 261 residues: 1-(5-phosphoribosyl)-5-[(5-phosphoribosylamino)methylideneamino] imidazole-4-carboxamide isomerase (261 aa).

Asp-15 acts as the Proton acceptor in catalysis. The active-site Proton donor is the Asp-136.

Belongs to the HisA/HisF family.

It is found in the cytoplasm. It carries out the reaction 1-(5-phospho-beta-D-ribosyl)-5-[(5-phospho-beta-D-ribosylamino)methylideneamino]imidazole-4-carboxamide = 5-[(5-phospho-1-deoxy-D-ribulos-1-ylimino)methylamino]-1-(5-phospho-beta-D-ribosyl)imidazole-4-carboxamide. The protein operates within amino-acid biosynthesis; L-histidine biosynthesis; L-histidine from 5-phospho-alpha-D-ribose 1-diphosphate: step 4/9. The protein is 1-(5-phosphoribosyl)-5-[(5-phosphoribosylamino)methylideneamino] imidazole-4-carboxamide isomerase of Synechococcus sp. (strain JA-2-3B'a(2-13)) (Cyanobacteria bacterium Yellowstone B-Prime).